Reading from the N-terminus, the 222-residue chain is Sugar fermentation stimulation protein homolog (222 aa).

It belongs to the SfsA family.

This Thermotoga maritima (strain ATCC 43589 / DSM 3109 / JCM 10099 / NBRC 100826 / MSB8) protein is Sugar fermentation stimulation protein homolog.